The following is a 253-amino-acid chain: Shikimate dehydrogenase (253 aa).

The Proton acceptor role is filled by K63. An NADP(+)-binding site is contributed by 115-119 (GAGGA).

This sequence belongs to the shikimate dehydrogenase family.

The catalysed reaction is shikimate + NADP(+) = 3-dehydroshikimate + NADPH + H(+). It participates in metabolic intermediate biosynthesis; chorismate biosynthesis; chorismate from D-erythrose 4-phosphate and phosphoenolpyruvate: step 4/7. The polypeptide is Shikimate dehydrogenase (aroE) (Thermotoga neapolitana (strain ATCC 49049 / DSM 4359 / NBRC 107923 / NS-E)).